Reading from the N-terminus, the 1393-residue chain is DNA-directed RNA polymerase subunit beta'' (1393 aa).

Zn(2+) is bound by residues Cys-220, Cys-291, Cys-298, and Cys-301.

This sequence belongs to the RNA polymerase beta' chain family. RpoC2 subfamily. In terms of assembly, in plastids the minimal PEP RNA polymerase catalytic core is composed of four subunits: alpha, beta, beta', and beta''. When a (nuclear-encoded) sigma factor is associated with the core the holoenzyme is formed, which can initiate transcription. The cofactor is Zn(2+).

Its subcellular location is the plastid. It localises to the chloroplast. The enzyme catalyses RNA(n) + a ribonucleoside 5'-triphosphate = RNA(n+1) + diphosphate. Its function is as follows. DNA-dependent RNA polymerase catalyzes the transcription of DNA into RNA using the four ribonucleoside triphosphates as substrates. The chain is DNA-directed RNA polymerase subunit beta'' from Gossypium hirsutum (Upland cotton).